The following is a 338-amino-acid chain: (-)-alpha-amorphene synthase ((2E,6E)-farnesyl diphosphate cyclizing) (338 aa).

Mg(2+)-binding residues include aspartate 105 and glutamate 109. The DDXXE motif motif lies at 105–109; the sequence is DDRAE. Substrate is bound at residue arginine 196. Residue serine 246 coordinates Mg(2+). Lysine 249 serves as a coordination point for substrate. A Mg(2+)-binding site is contributed by glutamate 250. 327–328 contacts substrate; sequence RY.

It belongs to the terpene synthase family. The cofactor is Mg(2+).

It carries out the reaction (2E,6E)-farnesyl diphosphate = (-)-alpha-amorphene + diphosphate. Its pathway is secondary metabolite biosynthesis; terpenoid biosynthesis. In terms of biological role, catalyzes the conversion of (2E,6E)-farnesyl diphosphate (FPP) to yield the bicyclic sesquiterpene (1R,6S,7S)-(-)-alpha-amorphene via a probable 1,6-cyclization, which could involve the abstraction of the pyrophosphate from FPP to yield a (R)-bisabolyl cation. The only accepted substrate is (2E,6E)-farnesyl diphosphate (FPP). This chain is (-)-alpha-amorphene synthase ((2E,6E)-farnesyl diphosphate cyclizing), found in Streptomyces viridochromogenes (strain DSM 40736 / JCM 4977 / BCRC 1201 / Tue 494).